The primary structure comprises 184 residues: Photosystem I assembly protein Ycf4 (184 aa).

2 helical membrane-spanning segments follow: residues 22 to 42 (FCWA…GTSS) and 57 to 77 (IIFF…LFIS).

This sequence belongs to the Ycf4 family.

The protein localises to the plastid. The protein resides in the chloroplast thylakoid membrane. In terms of biological role, seems to be required for the assembly of the photosystem I complex. This Platanus occidentalis (Sycamore) protein is Photosystem I assembly protein Ycf4.